The following is a 66-amino-acid chain: Large ribosomal subunit protein uL29 (66 aa).

It belongs to the universal ribosomal protein uL29 family.

The sequence is that of Large ribosomal subunit protein uL29 from Francisella tularensis subsp. tularensis (strain FSC 198).